The sequence spans 277 residues: Large ribosomal subunit protein uL2 (277 aa).

Positions Ser-211–Lys-277 are disordered.

It belongs to the universal ribosomal protein uL2 family. In terms of assembly, part of the 50S ribosomal subunit. Forms a bridge to the 30S subunit in the 70S ribosome.

In terms of biological role, one of the primary rRNA binding proteins. Required for association of the 30S and 50S subunits to form the 70S ribosome, for tRNA binding and peptide bond formation. It has been suggested to have peptidyltransferase activity; this is somewhat controversial. Makes several contacts with the 16S rRNA in the 70S ribosome. This chain is Large ribosomal subunit protein uL2, found in Staphylococcus epidermidis (strain ATCC 35984 / DSM 28319 / BCRC 17069 / CCUG 31568 / BM 3577 / RP62A).